The chain runs to 96 residues: Large ribosomal subunit protein uL23 (96 aa).

The protein belongs to the universal ribosomal protein uL23 family. In terms of assembly, part of the 50S ribosomal subunit. Contacts protein L29, and trigger factor when it is bound to the ribosome.

Functionally, one of the early assembly proteins it binds 23S rRNA. One of the proteins that surrounds the polypeptide exit tunnel on the outside of the ribosome. Forms the main docking site for trigger factor binding to the ribosome. In Clostridioides difficile (strain 630) (Peptoclostridium difficile), this protein is Large ribosomal subunit protein uL23.